The sequence spans 234 residues: CD-NTase-associated protein 13 (234 aa).

The chain crosses the membrane as a helical span at residues 20–42 (TIMKNVIANVSTAITLALMILWI).

The protein in the C-terminal section; belongs to the bacterial STING family.

It is found in the cell inner membrane. In terms of biological role, effector protein of a CBASS antivirus system. CBASS (cyclic oligonucleotide-based antiphage signaling system) provides immunity against bacteriophage. The CD-NTase protein synthesizes cyclic nucleotides in response to infection; these serve as specific second messenger signals. The signals activate a diverse range of effectors, leading to bacterial cell death and thus abortive phage infection. A type I-D CBASS(GG) system. Functionally, binds c-di-GMP (synthesized by the cognate CdnE encoded upstream in the same operon) and about 10-fold less well 3'3'-cGAMP, but not c-di-AMP, 2'3'-cGAMP or cUMP-AMP (tested with a protein without the transmembrane region). The effector protein for this CBASS system, its activity is stimulated by c-di-GMP and leads to cell death. In Roseivirga ehrenbergii (strain DSM 102268 / JCM 13514 / KCTC 12282 / NCIMB 14502 / KMM 6017), this protein is CD-NTase-associated protein 13.